A 383-amino-acid polypeptide reads, in one-letter code: Succinyl-diaminopimelate desuccinylase (383 aa).

His72 contributes to the Zn(2+) binding site. Asp74 is a catalytic residue. Asp105 contacts Zn(2+). Residue Glu137 is the Proton acceptor of the active site. Zn(2+)-binding residues include Glu138, Glu167, and His352.

It belongs to the peptidase M20A family. DapE subfamily. Homodimer. The cofactor is Zn(2+). Co(2+) is required as a cofactor.

The enzyme catalyses N-succinyl-(2S,6S)-2,6-diaminopimelate + H2O = (2S,6S)-2,6-diaminopimelate + succinate. The protein operates within amino-acid biosynthesis; L-lysine biosynthesis via DAP pathway; LL-2,6-diaminopimelate from (S)-tetrahydrodipicolinate (succinylase route): step 3/3. Its function is as follows. Catalyzes the hydrolysis of N-succinyl-L,L-diaminopimelic acid (SDAP), forming succinate and LL-2,6-diaminopimelate (DAP), an intermediate involved in the bacterial biosynthesis of lysine and meso-diaminopimelic acid, an essential component of bacterial cell walls. This Ehrlichia ruminantium (strain Gardel) protein is Succinyl-diaminopimelate desuccinylase.